A 170-amino-acid chain; its full sequence is MSLPNPAELIRQMATDLNAHLSKRGISDPRFIGIRTGGVWVAQALLEALNNPSPLGTLDVSFYRDDFSQNGLHPQVRPSELPFEIEGQHLVLIDDVLMSGRTVRAALNELFDYGRPASVTLVCLLDLNAGELPIRPNVVGATLSLAPNERIKLSGPEPLALELQDLSTAL.

The short motif at 90–102 (LVLIDDVLMSGRT) is the PRPP-binding element.

It belongs to the purine/pyrimidine phosphoribosyltransferase family. PyrR subfamily.

It catalyses the reaction UMP + diphosphate = 5-phospho-alpha-D-ribose 1-diphosphate + uracil. Functionally, regulates the transcription of the pyrimidine nucleotide (pyr) operon in response to exogenous pyrimidines. Its function is as follows. Also displays a weak uracil phosphoribosyltransferase activity which is not physiologically significant. The protein is Bifunctional protein PyrR of Pseudomonas syringae pv. tomato (strain ATCC BAA-871 / DC3000).